The primary structure comprises 503 residues: NAD-dependent protein deacetylase HST1 (503 aa).

The Deacetylase sirtuin-type domain occupies 183–468; that stretch reads RLPNFNTIDH…SLVAKKCHWD (286 aa). Residues 208 to 227 and 290 to 293 each bind NAD(+); these read GAGVSTSLGIPDFRSSEGFY and QNID. His310 functions as the Proton acceptor in the catalytic mechanism. Residues Cys318, Cys321, Cys342, and Cys345 each coordinate Zn(2+). NAD(+) is bound by residues 412-414, 437-439, and Cys454; these read GTS and NRD.

This sequence belongs to the sirtuin family. Class I subfamily. In terms of assembly, identified in the Set3C complex with HOS2, SIF2, SNT1, CPR1, HOS4/YIL112W and SET3. Its presence is however not essential for meiotic repression by the Set3C complex. Interacts with SUM1 and RFM1. The interaction with SUM1 is mediated by RFM1. The cofactor is Zn(2+).

It is found in the nucleus. The catalysed reaction is N(6)-acetyl-L-lysyl-[protein] + NAD(+) + H2O = 2''-O-acetyl-ADP-D-ribose + nicotinamide + L-lysyl-[protein]. In terms of biological role, NAD-dependent histone deacetylase involved in telomeric silencing. Histone deacetylase proteins act via the formation of large multiprotein complexes that are responsible for the deacetylation of lysine residues on the N-terminal part of the core histones (H2A, H2B, H3 and H4). Histone deacetylation gives a tag for epigenetic repression and plays an important role in transcriptional regulation, cell cycle progression and developmental events. Restores silencing at HMR in SIR2 mutants when overexpressed. Required to repress middle sporulation genes during vegetative growth. Acts as a sensor of NAD(+) levels and regulator of NAD(+) biosynthesis. Regulates the gene expression of de novo NAD(+) biosynthesis genes. This Saccharomyces cerevisiae (strain ATCC 204508 / S288c) (Baker's yeast) protein is NAD-dependent protein deacetylase HST1 (HST1).